Here is a 171-residue protein sequence, read N- to C-terminus: MPGTAEVQVRPGVEEDLKPLTDLYNHYVRETPITFDTEPFTPEERRPWLLSHPEDGPYRLRVATDAESQEILGYATSSPYRAKPAYATSVETTVYVAPGAGGRGIGSLLYASLFDALAAEDLHRAYAGIAQPNEASARLHARFGFRHVGTYREVGRKFGRYWDVAWYERPL.

Residues 7 to 171 (VQVRPGVEED…WDVAWYERPL (165 aa)) enclose the N-acetyltransferase domain. Acetyl-CoA-binding positions include 94–96 (VYV), 102–107 (GRGIGS), and Asn133.

The protein belongs to the acetyltransferase family. PAT/BAR subfamily.

The enzyme catalyses phosphinothricin + acetyl-CoA = N-acetylphosphinothricin + CoA + H(+). Inactivates phosphinothricin (PPT) by transfer of an acetyl group from acetyl CoA. The physiological substrate could be a structurally related compound. The protein is Phosphinothricin N-acetyltransferase of Streptomyces coelicolor (strain ATCC BAA-471 / A3(2) / M145).